Here is a 78-residue protein sequence, read N- to C-terminus: ATP synthase subunit c (78 aa).

Transmembrane regions (helical) follow at residues 9-29 and 56-76; these read AFIG…GQGW and AAVT…LVFV.

The protein belongs to the ATPase C chain family. As to quaternary structure, F-type ATPases have 2 components, F(1) - the catalytic core - and F(0) - the membrane proton channel. F(1) has five subunits: alpha(3), beta(3), gamma(1), delta(1), epsilon(1). F(0) has three main subunits: a(1), b(2) and c(10-14). The alpha and beta chains form an alternating ring which encloses part of the gamma chain. F(1) is attached to F(0) by a central stalk formed by the gamma and epsilon chains, while a peripheral stalk is formed by the delta and b chains.

The protein localises to the cell membrane. Functionally, f(1)F(0) ATP synthase produces ATP from ADP in the presence of a proton or sodium gradient. F-type ATPases consist of two structural domains, F(1) containing the extramembraneous catalytic core and F(0) containing the membrane proton channel, linked together by a central stalk and a peripheral stalk. During catalysis, ATP synthesis in the catalytic domain of F(1) is coupled via a rotary mechanism of the central stalk subunits to proton translocation. In terms of biological role, key component of the F(0) channel; it plays a direct role in translocation across the membrane. A homomeric c-ring of between 10-14 subunits forms the central stalk rotor element with the F(1) delta and epsilon subunits. This chain is ATP synthase subunit c, found in Malacoplasma penetrans (strain HF-2) (Mycoplasma penetrans).